The chain runs to 428 residues: Dihydroorotase (428 aa).

2 residues coordinate Zn(2+): histidine 59 and histidine 61. Substrate-binding positions include histidine 61–arginine 63 and asparagine 93. Positions 151, 178, and 231 each coordinate Zn(2+). Residue asparagine 277 participates in substrate binding. Aspartate 304 contacts Zn(2+). Aspartate 304 is an active-site residue. Substrate contacts are provided by residues histidine 308 and phenylalanine 322–glycine 323.

The protein belongs to the metallo-dependent hydrolases superfamily. DHOase family. Class I DHOase subfamily. Zn(2+) is required as a cofactor.

It carries out the reaction (S)-dihydroorotate + H2O = N-carbamoyl-L-aspartate + H(+). It functions in the pathway pyrimidine metabolism; UMP biosynthesis via de novo pathway; (S)-dihydroorotate from bicarbonate: step 3/3. Functionally, catalyzes the reversible cyclization of carbamoyl aspartate to dihydroorotate. The chain is Dihydroorotase from Halalkalibacterium halodurans (strain ATCC BAA-125 / DSM 18197 / FERM 7344 / JCM 9153 / C-125) (Bacillus halodurans).